The sequence spans 402 residues: Protein kinase US3 homolog (402 aa).

2 disordered regions span residues 1–21 (MSSSPEAETMECGISSSKVHD) and 46–88 (FPDS…SPET). Residues 102-386 (YNIVSSLSPG…AQDILMLPLF (285 aa)) form the Protein kinase domain. ATP is bound by residues 108–116 (LSPGSEGYI) and Lys-129. Asp-218 acts as the Proton acceptor in catalysis.

It belongs to the protein kinase superfamily. Ser/Thr protein kinase family. In terms of processing, phosphorylated by UL13 homolog; this phosphorylation regulates subsequent phosphorylation of UL31 and UL34 homologs by US3. Autophosphorylated.

The protein resides in the host cytoplasm. It is found in the host nucleus. It carries out the reaction L-seryl-[protein] + ATP = O-phospho-L-seryl-[protein] + ADP + H(+). It catalyses the reaction L-threonyl-[protein] + ATP = O-phospho-L-threonyl-[protein] + ADP + H(+). Multifunctional serine/threonine kinase that plays a role in several processes including egress of virus particles from the nucleus, modulation of the actin cytoskeleton and inhibition of apoptosis. Phosphorylates UL31 and UL34 homologs, two critical regulators of capsid budding from nucleus to endoplasmic reticulum, thereby facilitating virion egress. Modulates and redistributes host components of the nuclear envelope, including LMNA, emerin/EMD and the nuclear matrix protein MATR3. Phosphorylates envelope glycoprotein B (gB), probably to direct it to the cell surface. Promotes virus intracellular spread by restructuring host cell cytoskeleton. Blocks host apoptosis to extend cell survival and allow efficient viral replication. Promotes viral gene expression by phosphorylating host HDAC2 to reduce viral genome silencing. This chain is Protein kinase US3 homolog (MDV092), found in Gallus gallus (Chicken).